The chain runs to 704 residues: Elongation factor G (704 aa).

The tr-type G domain occupies 8 to 290 (ARYRNIGISA…AVIDYLPSPV (283 aa)). GTP-binding positions include 17 to 24 (AHIDAGKT), 88 to 92 (DTPGH), and 142 to 145 (NKMD).

The protein belongs to the TRAFAC class translation factor GTPase superfamily. Classic translation factor GTPase family. EF-G/EF-2 subfamily.

The protein localises to the cytoplasm. Functionally, catalyzes the GTP-dependent ribosomal translocation step during translation elongation. During this step, the ribosome changes from the pre-translocational (PRE) to the post-translocational (POST) state as the newly formed A-site-bound peptidyl-tRNA and P-site-bound deacylated tRNA move to the P and E sites, respectively. Catalyzes the coordinated movement of the two tRNA molecules, the mRNA and conformational changes in the ribosome. The chain is Elongation factor G from Salmonella arizonae (strain ATCC BAA-731 / CDC346-86 / RSK2980).